Consider the following 356-residue polypeptide: Protein pelota homolog (356 aa).

This sequence belongs to the eukaryotic release factor 1 family. Pelota subfamily. As to quaternary structure, monomer. A divalent metal cation serves as cofactor.

It localises to the cytoplasm. Functionally, may function in recognizing stalled ribosomes, interact with stem-loop structures in stalled mRNA molecules, and effect endonucleolytic cleavage of the mRNA. May play a role in the release non-functional ribosomes and degradation of damaged mRNAs. Has endoribonuclease activity. The protein is Protein pelota homolog of Pyrococcus abyssi (strain GE5 / Orsay).